A 572-amino-acid polypeptide reads, in one-letter code: Transducin-like enhancer protein 6 (572 aa).

3 disordered regions span residues 1 to 30 (MTSR…SSPT), 92 to 121 (QSEE…SSFE), and 174 to 236 (KAKP…VQEP). Over residues 14–30 (KSTSPCPGISNSESSPT) the composition is skewed to polar residues. WD repeat units lie at residues 284-322 (AHGE…AEDR), 332-372 (TPGA…LHVK), 377-416 (CAGL…VVRD), 419-456 (GYPD…KPLE), 458-497 (QFKS…RHMV), 499-538 (QKDS…KVFE), and 540-571 (PEMS…YQIT). Ser510 is subject to Phosphoserine; by PKA.

The protein belongs to the WD repeat Groucho/TLE family. Homodimers. Component of the subcortical maternal complex (SCMC), at least composed of NLRP5, KHDC3, OOEP, and TLE6. Within the complex, interacts with NLRP5, KHDC3 and OOEP. The SCMC may facilitate translocation of its components between the nuclear and cytoplasmic compartments. As part of the SCMC interacts with the SCMC-associated protein ZBED3. As part of the SCMC interacts with the SCMC-associated protein NLRP4F. As part of the SCMC interacts with the SCMC-associated protein CFL1/Cofilin-1. Interacts with FOXG1/BF-1; the interaction inhibits TLE1 interaction with FOXG1/BF-1. Interacts with NFATC1. Interacts with PAX6. In terms of assembly, component of the subcortical maternal complex (SCMC), at least composed of NLRP5, KHDC3L, OOEP, and TLE6 isoform 1. Within the complex, interacts with NLRP5, KHDC3L and OOEP. The SCMC may facilitate translocation of its components between the nuclear and cytoplasmic compartments.

The protein resides in the cytoplasm. It localises to the nucleus. Functionally, component of the subcortical maternal complex (SCMC), a multiprotein complex that plays a key role in early embryonic development. The SCMC complex is a structural constituent of cytoplasmic lattices, which consist in fibrous structures found in the cytoplasm of oocytes and preimplantation embryos. They are required to store maternal proteins critical for embryonic development, such as proteins that control epigenetic reprogramming of the preimplantation embryo, and prevent their degradation or activation. Also required for spermatogenesis: regulates spermatogonia proliferation and cell cycle progression, potentially via regulation of cell cycle regulatory genes such as; CEBPB, CEBPA, CSF3, PCNA, and CDK4. Suppresses FOXG1/BF-1-mediated transcriptional repression by inhibiting interaction of the transcriptional corepressor TLE1 with FOXG1 which promotes cortical neuron differentiation. Acts as a transcriptional corepressor of NFATC1-mediated gene expression by contributing to PAX6-mediated repression. Component of the subcortical maternal complex (SCMC), a multiprotein complex that plays a key role in early embryonic development. The polypeptide is Transducin-like enhancer protein 6 (Homo sapiens (Human)).